Consider the following 599-residue polypeptide: Serine/threonine-protein kinase Nek1 (599 aa).

The 255-residue stretch at 4–258 (YEVLEQIGKG…AAELLKHPHL (255 aa)) folds into the Protein kinase domain. ATP contacts are provided by residues 10-18 (IGKGAFGSA) and K33. The active-site Proton acceptor is D129. 3 disordered regions span residues 364–386 (SIVKTPKRTPSKTITTPQLEPPK), 461–482 (SEDPPFLKLHGRRSPTPTPQHC), and 504–542 (DDDDGRSDSSSGRNNAAAAASSRAGSSESTRQRRFDTSS). Over residues 511 to 530 (DSSSGRNNAAAAASSRAGSS) the composition is skewed to low complexity.

The protein belongs to the protein kinase superfamily. NEK Ser/Thr protein kinase family. NIMA subfamily. In terms of tissue distribution, expressed in anthers, pistils and leaves.

The catalysed reaction is L-seryl-[protein] + ATP = O-phospho-L-seryl-[protein] + ADP + H(+). The enzyme catalyses L-threonyl-[protein] + ATP = O-phospho-L-threonyl-[protein] + ADP + H(+). In terms of biological role, may be involved in plant development processes. The polypeptide is Serine/threonine-protein kinase Nek1 (Oryza sativa subsp. japonica (Rice)).